A 537-amino-acid polypeptide reads, in one-letter code: Glucans biosynthesis protein D (537 aa).

Positions 1 to 30 (MLMYRRDFLKSVTAAWVAFGLPNPLGGAFA) form a signal peptide, tat-type signal.

The protein belongs to the OpgD/OpgG family. Post-translationally, predicted to be exported by the Tat system. The position of the signal peptide cleavage has not been experimentally proven.

The protein localises to the periplasm. It participates in glycan metabolism; osmoregulated periplasmic glucan (OPG) biosynthesis. Its function is as follows. Probably involved in the control of the structural glucose backbone of osmoregulated periplasmic glucans (OPGs). The chain is Glucans biosynthesis protein D from Xylella fastidiosa (strain M12).